Consider the following 274-residue polypeptide: Diaminopimelate epimerase (274 aa).

Asn11, Gln44, and Asn64 together coordinate substrate. Cys73 functions as the Proton donor in the catalytic mechanism. Substrate-binding positions include 74 to 75, Asn157, Asn190, and 208 to 209; these read GN and ER. Cys217 functions as the Proton acceptor in the catalytic mechanism. 218–219 serves as a coordination point for substrate; sequence GS.

This sequence belongs to the diaminopimelate epimerase family. In terms of assembly, homodimer.

The protein resides in the cytoplasm. It catalyses the reaction (2S,6S)-2,6-diaminopimelate = meso-2,6-diaminopimelate. Its pathway is amino-acid biosynthesis; L-lysine biosynthesis via DAP pathway; DL-2,6-diaminopimelate from LL-2,6-diaminopimelate: step 1/1. In terms of biological role, catalyzes the stereoinversion of LL-2,6-diaminopimelate (L,L-DAP) to meso-diaminopimelate (meso-DAP), a precursor of L-lysine and an essential component of the bacterial peptidoglycan. This Salmonella agona (strain SL483) protein is Diaminopimelate epimerase.